We begin with the raw amino-acid sequence, 376 residues long: Deoxyguanosinetriphosphate triphosphohydrolase-like protein (376 aa).

Positions 1–32 (MEPSFAPYAAHSSQTRGRVHREAPAAPRSEFQ) are disordered. Positions 65–196 (RLTHSIEVAQ…ANLADEIAYN (132 aa)) constitute an HD domain.

This sequence belongs to the dGTPase family. Type 2 subfamily.

This chain is Deoxyguanosinetriphosphate triphosphohydrolase-like protein, found in Thiobacillus denitrificans (strain ATCC 25259 / T1).